We begin with the raw amino-acid sequence, 322 residues long: NADH oxidoreductase HCR (322 aa).

Residues 7–107 (QCPWRMQVHH…SDAMGEFTCD (101 aa)) enclose the FAD-binding FR-type domain. The tract at residues 111–213 (EDKFLLLAAG…APYMDWVEQE (103 aa)) is oxidoreductase. Positions 237-322 (SGLKFTKLQP…CHPQGDLVLA (86 aa)) constitute a 2Fe-2S ferredoxin-type domain. Residues Cys273, Cys278, Cys281, and Cys311 each coordinate [2Fe-2S] cluster.

This sequence in the N-terminal section; belongs to the FAD-binding oxidoreductase type 6 family. It depends on [2Fe-2S] cluster as a cofactor. The cofactor is FAD.

Functionally, NADH oxidoreductase acting in concert with HCP. This chain is NADH oxidoreductase HCR (hcr), found in Escherichia coli (strain K12).